The chain runs to 375 residues: Anhydro-N-acetylmuramic acid kinase (375 aa).

13 to 20 (GTSMDGVD) contacts ATP.

This sequence belongs to the anhydro-N-acetylmuramic acid kinase family.

The catalysed reaction is 1,6-anhydro-N-acetyl-beta-muramate + ATP + H2O = N-acetyl-D-muramate 6-phosphate + ADP + H(+). The protein operates within amino-sugar metabolism; 1,6-anhydro-N-acetylmuramate degradation. Its pathway is cell wall biogenesis; peptidoglycan recycling. Catalyzes the specific phosphorylation of 1,6-anhydro-N-acetylmuramic acid (anhMurNAc) with the simultaneous cleavage of the 1,6-anhydro ring, generating MurNAc-6-P. Is required for the utilization of anhMurNAc either imported from the medium or derived from its own cell wall murein, and thus plays a role in cell wall recycling. This chain is Anhydro-N-acetylmuramic acid kinase, found in Pelagibacter ubique (strain HTCC1062).